Reading from the N-terminus, the 569-residue chain is Synaptotagmin-4 (569 aa).

A helical transmembrane segment spans residues Met-1–Phe-21. Residues Gln-67 to Leu-251 enclose the SMP-LTD domain. The tract at residues Glu-229 to Thr-531 is phospholipid binding. 2 consecutive C2 domains span residues Arg-245–Leu-366 and Thr-426–Phe-543. Residues Asp-459, Asp-465, Asp-514, Asp-516, and Asp-521 each contribute to the Ca(2+) site.

This sequence belongs to the synaptotagmin family. Ca(2+) is required as a cofactor.

It is found in the membrane. Functionally, may be involved in membrane trafficking. The polypeptide is Synaptotagmin-4 (SYT4) (Arabidopsis thaliana (Mouse-ear cress)).